We begin with the raw amino-acid sequence, 108 residues long: UPF0145 protein SYNPCC7002_A1337 (108 aa).

The protein belongs to the UPF0145 family.

The polypeptide is UPF0145 protein SYNPCC7002_A1337 (Picosynechococcus sp. (strain ATCC 27264 / PCC 7002 / PR-6) (Agmenellum quadruplicatum)).